The primary structure comprises 324 residues: Probable cell division protein WhiA (324 aa).

Residues 275–308 (SLEELGALADPPLTKDAIAGRIRRLIAMADRRAD) constitute a DNA-binding region (H-T-H motif).

The protein belongs to the WhiA family.

Involved in cell division and chromosome segregation. The sequence is that of Probable cell division protein WhiA from Acidothermus cellulolyticus (strain ATCC 43068 / DSM 8971 / 11B).